The chain runs to 127 residues: uncharacterized protein (127 aa).

This is an uncharacterized protein from Methanocaldococcus jannaschii (strain ATCC 43067 / DSM 2661 / JAL-1 / JCM 10045 / NBRC 100440) (Methanococcus jannaschii).